The primary structure comprises 300 residues: NAD kinase (300 aa).

Asp75 functions as the Proton acceptor in the catalytic mechanism. Residues 75 to 76 (DG), 149 to 150 (ND), Arg177, Asp179, 190 to 195 (TAYALS), Ala214, and Gln248 each bind NAD(+).

The protein belongs to the NAD kinase family. A divalent metal cation is required as a cofactor.

It is found in the cytoplasm. It carries out the reaction NAD(+) + ATP = ADP + NADP(+) + H(+). In terms of biological role, involved in the regulation of the intracellular balance of NAD and NADP, and is a key enzyme in the biosynthesis of NADP. Catalyzes specifically the phosphorylation on 2'-hydroxyl of the adenosine moiety of NAD to yield NADP. The polypeptide is NAD kinase (Burkholderia ambifaria (strain MC40-6)).